Consider the following 340-residue polypeptide: tRNA N6-adenosine threonylcarbamoyltransferase (340 aa).

Residues H109 and H113 each coordinate Fe cation. Substrate is bound by residues 132–136, D165, G178, and N277; that span reads AISGA. Residue D302 coordinates Fe cation.

It belongs to the KAE1 / TsaD family. Fe(2+) serves as cofactor.

The protein resides in the cytoplasm. It carries out the reaction L-threonylcarbamoyladenylate + adenosine(37) in tRNA = N(6)-L-threonylcarbamoyladenosine(37) in tRNA + AMP + H(+). In terms of biological role, required for the formation of a threonylcarbamoyl group on adenosine at position 37 (t(6)A37) in tRNAs that read codons beginning with adenine. Is involved in the transfer of the threonylcarbamoyl moiety of threonylcarbamoyl-AMP (TC-AMP) to the N6 group of A37, together with TsaE and TsaB. TsaD likely plays a direct catalytic role in this reaction. This is tRNA N6-adenosine threonylcarbamoyltransferase from Chlamydia muridarum (strain MoPn / Nigg).